The sequence spans 143 residues: MSGDRDDPRYPYPKDDAELRRRLTPMQYEVTQHAATEPPFTGEYTDTEDAGIYHCVVCGTALFESGAKFHSGCGWPSYFKPIDGEVIDEKMDYTHGMTRVEVRCNQCGAHLGHVFEDGPRDKTGLRYCINSAALNFEAKPERK.

Residues 16–139 (DAELRRRLTP…NSAALNFEAK (124 aa)) form the MsrB domain. The Zn(2+) site is built by Cys-55, Cys-58, Cys-104, and Cys-107. The active-site Nucleophile is Cys-128.

It belongs to the MsrB Met sulfoxide reductase family. Zn(2+) serves as cofactor.

It carries out the reaction L-methionyl-[protein] + [thioredoxin]-disulfide + H2O = L-methionyl-(R)-S-oxide-[protein] + [thioredoxin]-dithiol. The protein is Peptide methionine sulfoxide reductase MsrB of Burkholderia mallei (strain NCTC 10229).